Consider the following 113-residue polypeptide: Protein AaeX (113 aa).

Helical transmembrane passes span L3–L23 and F43–S63.

The protein belongs to the AaeX family.

Its subcellular location is the cell membrane. This chain is Protein AaeX, found in Sodalis glossinidius (strain morsitans).